A 62-amino-acid chain; its full sequence is UPF0434 protein RL4569 (62 aa).

The protein belongs to the UPF0434 family.

The sequence is that of UPF0434 protein RL4569 from Rhizobium johnstonii (strain DSM 114642 / LMG 32736 / 3841) (Rhizobium leguminosarum bv. viciae).